Here is a 593-residue protein sequence, read N- to C-terminus: Aspartate--tRNA ligase (593 aa).

Glu-180 contacts L-aspartate. Positions 204 to 207 are aspartate; sequence QIFK. Residue Arg-226 coordinates L-aspartate. Residues 226-228 and Gln-235 contribute to the ATP site; that span reads RDE. His-453 lines the L-aspartate pocket. Glu-487 is a binding site for ATP. Residue Arg-494 participates in L-aspartate binding. Position 539–542 (539–542) interacts with ATP; that stretch reads GLDR.

This sequence belongs to the class-II aminoacyl-tRNA synthetase family. Type 1 subfamily. As to quaternary structure, homodimer.

It localises to the cytoplasm. The enzyme catalyses tRNA(Asp) + L-aspartate + ATP = L-aspartyl-tRNA(Asp) + AMP + diphosphate. In terms of biological role, catalyzes the attachment of L-aspartate to tRNA(Asp) in a two-step reaction: L-aspartate is first activated by ATP to form Asp-AMP and then transferred to the acceptor end of tRNA(Asp). This chain is Aspartate--tRNA ligase, found in Clostridium botulinum (strain 657 / Type Ba4).